Consider the following 62-residue polypeptide: Large ribosomal subunit protein bL33 (62 aa).

This sequence belongs to the bacterial ribosomal protein bL33 family.

The protein is Large ribosomal subunit protein bL33 of Trichodesmium erythraeum (strain IMS101).